The chain runs to 431 residues: Enolase (431 aa).

Residue Gln-167 coordinates (2R)-2-phosphoglycerate. The active-site Proton donor is Glu-209. 3 residues coordinate Mg(2+): Asp-246, Glu-289, and Asp-316. The (2R)-2-phosphoglycerate site is built by Lys-341, Arg-370, Ser-371, and Lys-392. Catalysis depends on Lys-341, which acts as the Proton acceptor.

This sequence belongs to the enolase family. Component of the RNA degradosome, a multiprotein complex involved in RNA processing and mRNA degradation. The cofactor is Mg(2+).

Its subcellular location is the cytoplasm. The protein resides in the secreted. It is found in the cell surface. The catalysed reaction is (2R)-2-phosphoglycerate = phosphoenolpyruvate + H2O. It participates in carbohydrate degradation; glycolysis; pyruvate from D-glyceraldehyde 3-phosphate: step 4/5. Its function is as follows. Catalyzes the reversible conversion of 2-phosphoglycerate (2-PG) into phosphoenolpyruvate (PEP). It is essential for the degradation of carbohydrates via glycolysis. This chain is Enolase, found in Shewanella woodyi (strain ATCC 51908 / MS32).